A 332-amino-acid polypeptide reads, in one-letter code: ADP-L-glycero-D-manno-heptose-6-epimerase (332 aa).

Residues 10–11 (FI), 31–32 (DD), lysine 38, 74–78 (QGACS), and asparagine 91 each bind NADP(+). The Proton acceptor role is filled by tyrosine 138. Lysine 142 lines the NADP(+) pocket. Asparagine 167 lines the substrate pocket. NADP(+) contacts are provided by valine 168 and lysine 176. Lysine 176 serves as the catalytic Proton acceptor. Substrate-binding positions include arginine 178, histidine 185, 199–202 (FSGW), arginine 212, and tyrosine 291.

The protein belongs to the NAD(P)-dependent epimerase/dehydratase family. HldD subfamily. Homopentamer. The cofactor is NADP(+).

The enzyme catalyses ADP-D-glycero-beta-D-manno-heptose = ADP-L-glycero-beta-D-manno-heptose. Its pathway is nucleotide-sugar biosynthesis; ADP-L-glycero-beta-D-manno-heptose biosynthesis; ADP-L-glycero-beta-D-manno-heptose from D-glycero-beta-D-manno-heptose 7-phosphate: step 4/4. Functionally, catalyzes the interconversion between ADP-D-glycero-beta-D-manno-heptose and ADP-L-glycero-beta-D-manno-heptose via an epimerization at carbon 6 of the heptose. The sequence is that of ADP-L-glycero-D-manno-heptose-6-epimerase from Bordetella avium (strain 197N).